The sequence spans 400 residues: MSLLDTLQRGLADLDAQGLRRVRRTADTACDAHMTVDGREIVGFASNDYLGLAAHPALIAAFAEGAQRYGSGSGGSHLLGGHSRAHATLEDELAAFSGGFSDAPRALYFSTGYMANLAAMTALTGKAATIFSDALNHASLIDGMRLSRANVQVYPHADTAALAALLDASDAETKLIVSDTVFSMDGDLAPLAELVALAERHGAWLVVDDAHGFGVLGPQGRGALAAAALRSPNLVYVGTLGKAAGVAGAFVIAHETVIEWMIQRARSYIFTTAAPPAVAHAVSASLKVIAGDEGDARRAHLAALIERTRALLRNTRWQPVDSHTAVQPLVIGSNDATLAAMRSLDAHGLWVPAIRPPTVPVGTSRLRVSLSAAHSFDDLARLEAALIEASEAQAVQKAAA.

Residue arginine 21 coordinates substrate. 112–113 lines the pyridoxal 5'-phosphate pocket; that stretch reads GY. Histidine 137 is a substrate binding site. 3 residues coordinate pyridoxal 5'-phosphate: serine 183, histidine 211, and threonine 239. Lysine 242 bears the N6-(pyridoxal phosphate)lysine mark. Threonine 358 contacts substrate.

The protein belongs to the class-II pyridoxal-phosphate-dependent aminotransferase family. BioF subfamily. In terms of assembly, homodimer. Pyridoxal 5'-phosphate is required as a cofactor.

It catalyses the reaction 6-carboxyhexanoyl-[ACP] + L-alanine + H(+) = (8S)-8-amino-7-oxononanoate + holo-[ACP] + CO2. The protein operates within cofactor biosynthesis; biotin biosynthesis. In terms of biological role, catalyzes the decarboxylative condensation of pimeloyl-[acyl-carrier protein] and L-alanine to produce 8-amino-7-oxononanoate (AON), [acyl-carrier protein], and carbon dioxide. This chain is 8-amino-7-oxononanoate synthase, found in Burkholderia lata (strain ATCC 17760 / DSM 23089 / LMG 22485 / NCIMB 9086 / R18194 / 383).